The following is a 497-amino-acid chain: Histone-lysine N-methyltransferase ASHR3 (497 aa).

A PHD-type zinc finger spans residues 118–186; the sequence is MVDCLVCHKP…QWRCVKCPMA (69 aa). An AWS domain is found at 283 to 326; it reads DGVGCTNCGPNCDRSCVCRVQCISCSKGCSCPESCGNRPFRKEK. One can recognise an SET domain in the interval 326-443; that stretch reads KKIKIVKTEH…AGEPLTYDYR (118 aa). The Post-SET domain occupies 449–465; that stretch reads PEVKCNCGSENCQGYLG.

Belongs to the class V-like SAM-binding methyltransferase superfamily. Histone-lysine methyltransferase family. SET2 subfamily. As to quaternary structure, interacts with AMS/bHLH21 by its SET domain and PHD finger. As to expression, expressed in roots, flowers and buds, the anther and in stamen filaments.

The protein resides in the nucleus. Its subcellular location is the chromosome. The catalysed reaction is L-lysyl-[histone] + S-adenosyl-L-methionine = N(6)-methyl-L-lysyl-[histone] + S-adenosyl-L-homocysteine + H(+). Histone methyltransferase. Involved in stamen development. The polypeptide is Histone-lysine N-methyltransferase ASHR3 (ASHR3) (Arabidopsis thaliana (Mouse-ear cress)).